A 265-amino-acid chain; its full sequence is uncharacterized protein (265 aa).

Disordered regions lie at residues 162-183 (VTKKNASNSNGNEGTLTVNNDQ) and 196-239 (AKTN…DKEI). 2 stretches are compositionally biased toward polar residues: residues 165–183 (KNASNSNGNEGTLTVNNDQ) and 213–233 (QSTSLIQLKEGSANTTEGNAS).

This sequence belongs to the MG185/MG260 family.

This is an uncharacterized protein from Mycoplasma pneumoniae (strain ATCC 29342 / M129 / Subtype 1) (Mycoplasmoides pneumoniae).